The primary structure comprises 406 residues: Tyrosine--tRNA ligase (406 aa).

The short motif at 48-57 (PSRPDLHLGH) is the 'HIGH' region element. Residues 232 to 236 (KMSKS) carry the 'KMSKS' region motif. K235 provides a ligand contact to ATP. The 63-residue stretch at 339–401 (MPVVELLMAL…GKRKFFKVAR (63 aa)) folds into the S4 RNA-binding domain.

The protein belongs to the class-I aminoacyl-tRNA synthetase family. TyrS type 2 subfamily. As to quaternary structure, homodimer.

It is found in the cytoplasm. The enzyme catalyses tRNA(Tyr) + L-tyrosine + ATP = L-tyrosyl-tRNA(Tyr) + AMP + diphosphate + H(+). In terms of biological role, catalyzes the attachment of tyrosine to tRNA(Tyr) in a two-step reaction: tyrosine is first activated by ATP to form Tyr-AMP and then transferred to the acceptor end of tRNA(Tyr). The protein is Tyrosine--tRNA ligase of Chlorobaculum tepidum (strain ATCC 49652 / DSM 12025 / NBRC 103806 / TLS) (Chlorobium tepidum).